A 138-amino-acid polypeptide reads, in one-letter code: Basic phospholipase A2 homolog Tbo-K49 (138 aa).

Positions 1–16 (MRTLWIMAVLLVGVEG) are cleaved as a signal peptide. Intrachain disulfides connect cysteine 42–cysteine 131, cysteine 44–cysteine 60, cysteine 59–cysteine 111, cysteine 65–cysteine 138, cysteine 66–cysteine 104, and cysteine 91–cysteine 102. Positions 121-133 (KKERINTKIFCKK) are important for membrane-damaging activities in eukaryotes and bacteria; heparin-binding.

As to quaternary structure, monomer. In terms of tissue distribution, expressed by the venom gland.

It is found in the secreted. Snake venom phospholipase A2 homolog that lacks catalytic activity. It induces local edema. Is myotoxic. A model of myotoxic mechanism has been proposed: an apo Lys49-PLA2 is activated by the entrance of a hydrophobic molecule (e.g. fatty acid) at the hydrophobic channel of the protein leading to a reorientation of a monomer. This reorientation causes a transition between 'inactive' to 'active' states, causing alignment of C-terminal and membrane-docking sites (MDoS) side-by-side and putting the membrane-disruption sites (MDiS) in the same plane, exposed to solvent and in a symmetric position for both monomers. The MDoS region stabilizes the toxin on membrane by the interaction of charged residues with phospholipid head groups. Subsequently, the MDiS region destabilizes the membrane with penetration of hydrophobic residues. This insertion causes a disorganization of the membrane, allowing an uncontrolled influx of ions (i.e. calcium and sodium), and eventually triggering irreversible intracellular alterations and cell death. The protein is Basic phospholipase A2 homolog Tbo-K49 of Craspedocephalus borneensis (Borneo pit viper).